The primary structure comprises 309 residues: Probable manganese-dependent inorganic pyrophosphatase (309 aa).

Mn(2+)-binding residues include His-9, Asp-13, Asp-15, Asp-75, His-97, and Asp-149.

Belongs to the PPase class C family. It depends on Mn(2+) as a cofactor.

It localises to the cytoplasm. It catalyses the reaction diphosphate + H2O = 2 phosphate + H(+). The chain is Probable manganese-dependent inorganic pyrophosphatase from Bacillus cereus (strain AH187).